The sequence spans 489 residues: Male-specific lethal 1-like 1 (489 aa).

2 disordered regions span residues 126-164 (PMVS…VRKG) and 224-311 (VKKD…EDMQ). A coiled-coil region spans residues 179–227 (LLLQLELIEQQQKHLHNKNKEIEDLKAEKEMLMARIERMEHRLQMVKKD). One can recognise a PEHE domain in the interval 347–466 (TVEVPSWRES…LKQQDFDLPW (120 aa)). The interval 371–389 (ECLDDSVFLKRHSKLELDE) is interaction with KAT8 HAT domain. Positions 380–394 (KRHSKLELDEKRRKR) match the Bipartite nuclear localization signal motif.

Belongs to the msl-1 family. Component of a multisubunit histone acetyltransferase complex (MSL). Interacts (via PEHE domain) with KAT8 (via HAT domain) and MSL3 (via MRG domain); both interactions are direct.

It is found in the nucleus. It localises to the nucleoplasm. The protein resides in the nucleus speckle. In terms of biological role, component of histone acetyltransferase complex. Within MSL complex, promotes ubiquitination of histone H2B. The protein is Male-specific lethal 1-like 1 (msl1l1) of Danio rerio (Zebrafish).